A 332-amino-acid polypeptide reads, in one-letter code: Probable endo-beta-1,4-glucanase B (332 aa).

The signal sequence occupies residues 1-18; it reads MKFQSTLLLAAAAGSALA. N-linked (GlcNAc...) asparagine glycans are attached at residues Asn-38 and Asn-100. Glu-160 acts as the Proton donor in catalysis. The N-linked (GlcNAc...) asparagine glycan is linked to Asn-212. Glu-267 functions as the Nucleophile in the catalytic mechanism. N-linked (GlcNAc...) asparagine glycosylation is present at Asn-289.

This sequence belongs to the glycosyl hydrolase 5 (cellulase A) family.

The protein localises to the secreted. It catalyses the reaction Endohydrolysis of (1-&gt;4)-beta-D-glucosidic linkages in cellulose, lichenin and cereal beta-D-glucans.. Has endoglucanase activity on substrates containing beta-1,4 glycosidic bonds, like in carboxymethylcellulose (CMC), hydroxyethylcellulose (HEC) and beta-glucan. Involved in the degradation of complex natural cellulosic substrates. The protein is Probable endo-beta-1,4-glucanase B (eglB) of Aspergillus kawachii (strain NBRC 4308) (White koji mold).